The sequence spans 439 residues: GTPase Obg (439 aa).

The Obg domain maps to 5–164 (TDFFDQATIV…LTLELELKML (160 aa)). In terms of domain architecture, OBG-type G spans 165–335 (ADVGLVGFPN…LLRRVADLLR (171 aa)). GTP-binding positions include 171–178 (GFPNAGKS), 196–200 (FTTLT), 217–220 (DIPG), 287–290 (NKAD), and 316–318 (SAA). Mg(2+) contacts are provided by Ser178 and Thr198. Residues 356-433 (LPEVDENAFT…IGRAELVWDD (78 aa)) enclose the OCT domain.

The protein belongs to the TRAFAC class OBG-HflX-like GTPase superfamily. OBG GTPase family. As to quaternary structure, monomer. Requires Mg(2+) as cofactor.

The protein resides in the cytoplasm. An essential GTPase which binds GTP, GDP and possibly (p)ppGpp with moderate affinity, with high nucleotide exchange rates and a fairly low GTP hydrolysis rate. Plays a role in control of the cell cycle, stress response, ribosome biogenesis and in those bacteria that undergo differentiation, in morphogenesis control. The sequence is that of GTPase Obg from Chloroflexus aurantiacus (strain ATCC 29364 / DSM 637 / Y-400-fl).